Consider the following 391-residue polypeptide: Extracellular metalloproteinase 3 (391 aa).

Positions 1 to 9 (HNVVDYVAS) are excised as a propeptide. N-linked (GlcNAc...) asparagine glycosylation occurs at Asn-173. His-192 lines the Zn(2+) pocket. Glu-193 is an active-site residue. Residue His-196 participates in Zn(2+) binding. 2 N-linked (GlcNAc...) asparagine glycosylation sites follow: Asn-243 and Asn-385.

Belongs to the peptidase M36 family. Zn(2+) is required as a cofactor.

Its subcellular location is the secreted. Functionally, secreted metalloproteinase probably acting as a virulence factor. The polypeptide is Extracellular metalloproteinase 3 (MEP3) (Trichophyton soudanense).